A 110-amino-acid polypeptide reads, in one-letter code: NADH-quinone oxidoreductase subunit K (110 aa).

3 helical membrane-spanning segments follow: residues 14–34 (VSQYFILSFILLGIGLFGMMV), 39–59 (ITILMSLELALNSVNIAFVGI), and 70–90 (IFALFTIALAAAEAAVGLGII).

The protein belongs to the complex I subunit 4L family. As to quaternary structure, NDH-1 is composed of 14 different subunits. Subunits NuoA, H, J, K, L, M, N constitute the membrane sector of the complex.

It is found in the cell inner membrane. The catalysed reaction is a quinone + NADH + 5 H(+)(in) = a quinol + NAD(+) + 4 H(+)(out). In terms of biological role, NDH-1 shuttles electrons from NADH, via FMN and iron-sulfur (Fe-S) centers, to quinones in the respiratory chain. The immediate electron acceptor for the enzyme in this species is believed to be ubiquinone. Couples the redox reaction to proton translocation (for every two electrons transferred, four hydrogen ions are translocated across the cytoplasmic membrane), and thus conserves the redox energy in a proton gradient. The sequence is that of NADH-quinone oxidoreductase subunit K from Hydrogenobaculum sp. (strain Y04AAS1).